The primary structure comprises 700 residues: Elongation factor G (700 aa).

The tr-type G domain occupies 8–290; sequence ERYRNIGISA…AVVEYLPSPV (283 aa). GTP-binding positions include 17–24, 88–92, and 142–145; these read AHIDAGKT, DTPGH, and NKMD.

The protein belongs to the TRAFAC class translation factor GTPase superfamily. Classic translation factor GTPase family. EF-G/EF-2 subfamily.

Its subcellular location is the cytoplasm. Its function is as follows. Catalyzes the GTP-dependent ribosomal translocation step during translation elongation. During this step, the ribosome changes from the pre-translocational (PRE) to the post-translocational (POST) state as the newly formed A-site-bound peptidyl-tRNA and P-site-bound deacylated tRNA move to the P and E sites, respectively. Catalyzes the coordinated movement of the two tRNA molecules, the mRNA and conformational changes in the ribosome. The polypeptide is Elongation factor G (Mannheimia succiniciproducens (strain KCTC 0769BP / MBEL55E)).